Here is a 40-residue protein sequence, read N- to C-terminus: Protein YneP (40 aa).

The protein is Protein YneP of Escherichia coli (strain K12).